The sequence spans 23 residues: Superoxide dismutase [Mn], mitochondrial (23 aa).

It belongs to the iron/manganese superoxide dismutase family. Homotetramer. Mn(2+) serves as cofactor.

It is found in the mitochondrion matrix. It catalyses the reaction 2 superoxide + 2 H(+) = H2O2 + O2. Destroys superoxide anion radicals which are normally produced within the cells and which are toxic to biological systems. The polypeptide is Superoxide dismutase [Mn], mitochondrial (Aquarana catesbeiana (American bullfrog)).